Here is a 236-residue protein sequence, read N- to C-terminus: Movement and silencing protein TGBp1 (236 aa).

Residues 1-117 (MDSEIVERLT…EPTARAHYTC (117 aa)) enclose the (+)RNA virus helicase ATP-binding domain. The (+)RNA virus helicase C-terminal domain occupies 118-236 (NRTHRLGQLT…LYTAHFAPSA (119 aa)).

Belongs to the Tymovirales TGBp1 protein family. Homodimer and homooligomer. Interacts with capsid protein. Interacts with host AGO1; this interaction targets the host protein for degradation, thereby suppressing the antiviral RNA silencing.

The protein resides in the host cytoplasm. Functionally, transports viral genome to neighboring plant cells directly through plasmosdesmata, without any budding. The movement protein allows efficient cell to cell propagation, by bypassing the host cell wall barrier. Increases plasmodesma size exclusion limit. Acts as a suppressor of RNA-mediated gene silencing, also known as post-transcriptional gene silencing (PTGS), a mechanism of plant viral defense that limits the accumulation of viral RNAs. The protein is Movement and silencing protein TGBp1 of Setaria italica (Foxtail millet).